Consider the following 187-residue polypeptide: GTP cyclohydrolase 1 (187 aa).

Cys-76, His-79, and Cys-148 together coordinate Zn(2+).

This sequence belongs to the GTP cyclohydrolase I family. Homomer.

The catalysed reaction is GTP + H2O = 7,8-dihydroneopterin 3'-triphosphate + formate + H(+). The protein operates within cofactor biosynthesis; 7,8-dihydroneopterin triphosphate biosynthesis; 7,8-dihydroneopterin triphosphate from GTP: step 1/1. This is GTP cyclohydrolase 1 from Streptococcus gordonii (strain Challis / ATCC 35105 / BCRC 15272 / CH1 / DL1 / V288).